A 406-amino-acid polypeptide reads, in one-letter code: uncharacterized protein (406 aa).

Transmembrane regions (helical) follow at residues 7 to 27, 43 to 63, 69 to 89, 98 to 118, 155 to 175, 220 to 240, 253 to 273, 297 to 317, 352 to 372, and 374 to 394; these read SILF…MVVI, VTLI…LITI, LTII…FYAL, LILV…FSPL, GLII…FLLF, IIIM…SVSL, WWGF…FIIY, LTLI…VLFM, VQFI…FLGV, and LVYV…FSQL.

This sequence belongs to the major facilitator superfamily.

The protein resides in the cell membrane. This is an uncharacterized protein from Bacillus subtilis (strain 168).